The sequence spans 264 residues: 3-methyl-2-oxobutanoate hydroxymethyltransferase (264 aa).

Residues Asp-45 and Asp-84 each coordinate Mg(2+). Residues 45 to 46 (DS), Asp-84, and Lys-112 each bind 3-methyl-2-oxobutanoate. Glu-114 contributes to the Mg(2+) binding site. The active-site Proton acceptor is Glu-181.

This sequence belongs to the PanB family. In terms of assembly, homodecamer; pentamer of dimers. Requires Mg(2+) as cofactor.

The protein localises to the cytoplasm. It carries out the reaction 3-methyl-2-oxobutanoate + (6R)-5,10-methylene-5,6,7,8-tetrahydrofolate + H2O = 2-dehydropantoate + (6S)-5,6,7,8-tetrahydrofolate. It functions in the pathway cofactor biosynthesis; (R)-pantothenate biosynthesis; (R)-pantoate from 3-methyl-2-oxobutanoate: step 1/2. Its function is as follows. Catalyzes the reversible reaction in which hydroxymethyl group from 5,10-methylenetetrahydrofolate is transferred onto alpha-ketoisovalerate to form ketopantoate. This chain is 3-methyl-2-oxobutanoate hydroxymethyltransferase, found in Shewanella sediminis (strain HAW-EB3).